The chain runs to 266 residues: Receptor-recognizing protein gp38 (266 aa).

Short sequence motifs (GRM) lie at residues 116–123, 126–137, 157–171, 174–184, 187–191, 194–200, 202–209, 214–220, 223–228, and 232–246; these read GRGGNGGY, SGGDGNGTQGGH, AGGGGGGGIAYRPHS, KWQDIGGGGGR, GGAGG, YSGGAAS, EGPGGGYD, HSGAGGN, AAGQNA, and GGKVLKVGVGGASGH.

This sequence belongs to the receptor-recognizing protein gp38 family.

Its subcellular location is the virion. Receptor binding protein (RBP) that is at the tip of the long tail fibers and serves as the phage recognition site for the attachment host receptor. Probably uses the host receptor OmpA. The sequence is that of Receptor-recognizing protein gp38 (38) from Enterobacteria phage Ox2 (Bacteriophage Ox2).